The chain runs to 37 residues: MKVRASVRRICEKCRVIRRKGRVMVICANPKHKQRQG.

This sequence belongs to the bacterial ribosomal protein bL36 family.

This chain is Large ribosomal subunit protein bL36, found in Cyanothece sp. (strain PCC 7425 / ATCC 29141).